Consider the following 75-residue polypeptide: Sec-independent protein translocase protein TatA (75 aa).

Residues 1–21 (MGSFSIWHWLVVLAIVLLVFG) form a helical membrane-spanning segment. Residues 41–75 (KGMRDEDKPNAQLGDESRTQDASRTAQDEHDRNAR) form a disordered region.

Belongs to the TatA/E family. As to quaternary structure, the Tat system comprises two distinct complexes: a TatABC complex, containing multiple copies of TatA, TatB and TatC subunits, and a separate TatA complex, containing only TatA subunits. Substrates initially bind to the TatABC complex, which probably triggers association of the separate TatA complex to form the active translocon.

The protein localises to the cell inner membrane. Part of the twin-arginine translocation (Tat) system that transports large folded proteins containing a characteristic twin-arginine motif in their signal peptide across membranes. TatA could form the protein-conducting channel of the Tat system. This chain is Sec-independent protein translocase protein TatA, found in Stenotrophomonas maltophilia (strain K279a).